The following is a 459-amino-acid chain: Cysteine--tRNA ligase (459 aa).

Cysteine 28 serves as a coordination point for Zn(2+). Residues 30–40 (VTVYDLCHFGH) carry the 'HIGH' region motif. Zn(2+)-binding residues include cysteine 209, histidine 234, and glutamate 238. Positions 266–270 (KMSKS) match the 'KMSKS' region motif. Lysine 269 lines the ATP pocket.

Belongs to the class-I aminoacyl-tRNA synthetase family. As to quaternary structure, monomer. Zn(2+) is required as a cofactor.

The protein resides in the cytoplasm. The enzyme catalyses tRNA(Cys) + L-cysteine + ATP = L-cysteinyl-tRNA(Cys) + AMP + diphosphate. This is Cysteine--tRNA ligase from Actinobacillus succinogenes (strain ATCC 55618 / DSM 22257 / CCUG 43843 / 130Z).